Consider the following 66-residue polypeptide: Large ribosomal subunit protein bL33c (66 aa).

Belongs to the bacterial ribosomal protein bL33 family.

The protein resides in the plastid. The protein localises to the chloroplast. The protein is Large ribosomal subunit protein bL33c (rpl33) of Arabidopsis thaliana (Mouse-ear cress).